We begin with the raw amino-acid sequence, 280 residues long: MSFSVQIKHELATNPLIKTEWSSFLAGYFQNGLKLLATGQWSFKTSTATLKALFSNALQFSFQIHETSTHCEFSFRASQTEVDQLLAFDATQSDLPLQKAYVIGAFLSGGSVSDLLHSSNFHLQISTNNELQIKQLMKLFHPFKQTTKRHQLLVYVKSYQAICDFFKLVEAFDGYLAFEENQLQKNFALEQVRKSNLEIANLMRTLKTSTSTAEQLKILINSADFKKQSLNFQRFCLVKLDHPDWSLEQIAQFFERKYKVQITRSGIQHLNAKLKKLNQN.

Positions 246-279 form a DNA-binding region, H-T-H motif; sequence SLEQIAQFFERKYKVQITRSGIQHLNAKLKKLNQ.

The protein belongs to the WhiA family.

Functionally, involved in cell division and chromosome segregation. The protein is Probable cell division protein WhiA of Mycoplasma pneumoniae (strain ATCC 29342 / M129 / Subtype 1) (Mycoplasmoides pneumoniae).